The primary structure comprises 132 residues: Large-conductance mechanosensitive channel (132 aa).

2 helical membrane passes run 11 to 31 (FISR…GAFG) and 75 to 95 (GSFL…FLLV).

Belongs to the MscL family. As to quaternary structure, homopentamer.

Its subcellular location is the cell inner membrane. Functionally, channel that opens in response to stretch forces in the membrane lipid bilayer. May participate in the regulation of osmotic pressure changes within the cell. In Synechococcus sp. (strain JA-2-3B'a(2-13)) (Cyanobacteria bacterium Yellowstone B-Prime), this protein is Large-conductance mechanosensitive channel.